The following is a 261-amino-acid chain: Small ribosomal subunit protein eS1 (261 aa).

Positions 1 to 18 (MAVGKNKRISKGKKGGKK) are enriched in basic residues. The interval 1–21 (MAVGKNKRISKGKKGGKKKAT) is disordered.

Belongs to the eukaryotic ribosomal protein eS1 family. In terms of assembly, component of the small ribosomal subunit. Mature ribosomes consist of a small (40S) and a large (60S) subunit. The 40S subunit contains about 33 different proteins and 1 molecule of RNA (18S). The 60S subunit contains about 49 different proteins and 3 molecules of RNA (25S, 5.8S and 5S).

The protein resides in the cytoplasm. The polypeptide is Small ribosomal subunit protein eS1 (cyc07) (Daucus carota (Wild carrot)).